The primary structure comprises 457 residues: MTISSSLTPKETLAELDRYIVGQAAAKRSVAIALRNRWRRQQVPSPLREEIAPKNIIMIGPTGVGKTEIARRLASLAQSPFIKVEASKFTEVGYVGRDVESMIRDLVELAISMVKDEEKKRIEGLAEANAEDRILDLLLPPTPVHSESSVDLLPASADVSAAGSSTKEKFRQMLRDGKLDEREVEVEVTETSQAPMVEVMGVSGMDDMQSNIQDAFSRMFPKKTKQSKMKVPDALDVLTKEEMEKLVDMEMVLKEALRRTEQSGIVFLDEIDKVASKGGSSHGPEVSREGVQRDLLPIVEGATVSTKYGMVKTDHILFIASGAFHVAKPSDLIPELQGRFPIRVELESLGKDEFVRILTEPENALTKQYIALLATEGVTLRFEDEAIEEIATIAVQVNESTEEIGARRLHTVVERVLDVLSFDACEREESEFVVTAQYVRDQLSEIAEDQDLSRYIL.

Residues valine 21, glycine 63 to glutamate 68, aspartate 269, glutamate 335, and arginine 407 each bind ATP.

It belongs to the ClpX chaperone family. HslU subfamily. In terms of assembly, a double ring-shaped homohexamer of HslV is capped on each side by a ring-shaped HslU homohexamer. The assembly of the HslU/HslV complex is dependent on binding of ATP.

The protein localises to the cytoplasm. In terms of biological role, ATPase subunit of a proteasome-like degradation complex; this subunit has chaperone activity. The binding of ATP and its subsequent hydrolysis by HslU are essential for unfolding of protein substrates subsequently hydrolyzed by HslV. HslU recognizes the N-terminal part of its protein substrates and unfolds these before they are guided to HslV for hydrolysis. The chain is ATP-dependent protease ATPase subunit HslU from Desulfotalea psychrophila (strain LSv54 / DSM 12343).